The primary structure comprises 349 residues: Phenylalanine--tRNA ligase alpha subunit (349 aa).

Glu-261 is a binding site for Mg(2+).

It belongs to the class-II aminoacyl-tRNA synthetase family. Phe-tRNA synthetase alpha subunit type 1 subfamily. Tetramer of two alpha and two beta subunits. The cofactor is Mg(2+).

The protein resides in the cytoplasm. It catalyses the reaction tRNA(Phe) + L-phenylalanine + ATP = L-phenylalanyl-tRNA(Phe) + AMP + diphosphate + H(+). This chain is Phenylalanine--tRNA ligase alpha subunit, found in Leuconostoc citreum (strain KM20).